The following is a 647-amino-acid chain: Zinc finger protein 567 (647 aa).

The KRAB domain maps to 32-77 (MDVMLENYCHLISVGCHMTKPDVILKLERGEEPWTSFKGHTCLEEN). Residues K173, K202, and K217 each participate in a glycyl lysine isopeptide (Lys-Gly) (interchain with G-Cter in SUMO2) cross-link. Residues 210–232 (FEYNDCEKAFLKRGGPVTHSRTY) form a C2H2-type 1; degenerate zinc finger. C2H2-type zinc fingers lie at residues 253-275 (HTCT…QGIH), 281-303 (YQCH…QRTH), 309-331 (FVCN…QRTH), 337-359 (YECP…QRTH), 365-387 (YECS…QRIH), 393-415 (YICK…QRTH), and 421-443 (YICN…EKTH). K447 participates in a covalent cross-link: Glycyl lysine isopeptide (Lys-Gly) (interchain with G-Cter in SUMO2). 7 consecutive C2H2-type zinc fingers follow at residues 449–471 (YICN…QRTH), 477–499 (YECP…HRTH), 505–527 (YECN…QRIH), 533–555 (YICN…QKIH), 561–583 (YECP…QRTH), 589–611 (YKCS…QRTH), and 617–639 (YICN…QRTH).

The protein belongs to the krueppel C2H2-type zinc-finger protein family.

It is found in the nucleus. In terms of biological role, may be involved in transcriptional regulation. In Bos taurus (Bovine), this protein is Zinc finger protein 567 (ZNF567).